A 125-amino-acid chain; its full sequence is Large ribosomal subunit protein bL12 (125 aa).

Belongs to the bacterial ribosomal protein bL12 family. In terms of assembly, homodimer. Part of the ribosomal stalk of the 50S ribosomal subunit. Forms a multimeric L10(L12)X complex, where L10 forms an elongated spine to which 2 to 4 L12 dimers bind in a sequential fashion. Binds GTP-bound translation factors.

Forms part of the ribosomal stalk which helps the ribosome interact with GTP-bound translation factors. Is thus essential for accurate translation. The chain is Large ribosomal subunit protein bL12 from Coprothermobacter proteolyticus (strain ATCC 35245 / DSM 5265 / OCM 4 / BT).